Consider the following 445-residue polypeptide: tRNA-2-methylthio-N(6)-dimethylallyladenosine synthase (445 aa).

The 116-residue stretch at Gln2–Lys117 folds into the MTTase N-terminal domain. The [4Fe-4S] cluster site is built by Cys11, Cys47, Cys80, Cys157, Cys161, and Cys164. The region spanning Lys143–Glu374 is the Radical SAM core domain. Residues Lys377–Asn441 enclose the TRAM domain.

This sequence belongs to the methylthiotransferase family. MiaB subfamily. In terms of assembly, monomer. Requires [4Fe-4S] cluster as cofactor.

The protein resides in the cytoplasm. It catalyses the reaction N(6)-dimethylallyladenosine(37) in tRNA + (sulfur carrier)-SH + AH2 + 2 S-adenosyl-L-methionine = 2-methylsulfanyl-N(6)-dimethylallyladenosine(37) in tRNA + (sulfur carrier)-H + 5'-deoxyadenosine + L-methionine + A + S-adenosyl-L-homocysteine + 2 H(+). Functionally, catalyzes the methylthiolation of N6-(dimethylallyl)adenosine (i(6)A), leading to the formation of 2-methylthio-N6-(dimethylallyl)adenosine (ms(2)i(6)A) at position 37 in tRNAs that read codons beginning with uridine. The polypeptide is tRNA-2-methylthio-N(6)-dimethylallyladenosine synthase (Ehrlichia ruminantium (strain Welgevonden)).